Consider the following 654-residue polypeptide: Collagen alpha-1(XXV) chain (654 aa).

Positions 1–26 (MLLKKHAGKGGGREPRSEDPTPAEQH) are disordered. Topologically, residues 1-33 (MLLKKHAGKGGGREPRSEDPTPAEQHCARTMPP) are cytoplasmic. Residues 34–54 (CAVLAALLSVVAVVSCLYLGV) traverse the membrane as a helical; Signal-anchor for type II membrane protein segment. The Extracellular portion of the chain corresponds to 55-654 (KTNDLQARIA…GLPMPGCWQK (600 aa)). Glu-113 carries the pyrrolidone carboxylic acid (Glu) modification. The tract at residues 116-168 (SECNCPAGPPGKRGKRGRRGESGPPGQPGPQGPPGPKGDKGEQGDQGPRMVFP) is disordered. Positions 121–164 (PAGPPGKRGKRGRRGESGPPGQPGPQGPPGPKGDKGEQGDQGPR) constitute a Collagen-like 1 domain. Positions 140–151 (PGQPGPQGPPGP) are enriched in pro residues. The tract at residues 181 to 188 (LIKRRLIK) is interaction with amyloid-beta peptide. 2 disordered regions span residues 189 to 426 (GDQG…QGAT) and 445 to 654 (LTVT…CWQK). 5 Collagen-like domains span residues 192 to 247 (GQAG…QKGS), 249 to 308 (GAPG…PGSS), 311 to 370 (GIKG…AGPP), 372 to 425 (RGER…DQGA), and 447 to 505 (VTGP…PGLP). Residues 196–208 (PPGPPGPPGPRGP) show a composition bias toward pro residues. Residues 230–245 (PGEQGLMGPLGPPGQK) are compositionally biased toward low complexity. Basic and acidic residues predominate over residues 280 to 290 (EPGEQGEKGDA). The segment covering 336-358 (LPGIKGEPGFIGPQGEPGLPGLP) has biased composition (low complexity). Basic and acidic residues-rich tracts occupy residues 361 to 377 (KGER…ERGE) and 398 to 407 (SKGDRGEKGD). Positions 457-466 (QGLQGPKGEQ) are enriched in low complexity. Residues 494-503 (GEKGGIGLPG) show a composition bias toward gly residues. A compositionally biased stretch (low complexity) spans 517–527 (SGMPGPQGPSI). Pro residues predominate over residues 528–543 (IGPPGPPGPHGPPGPM). Residues 571–630 (GEKGAMGEPGPRGPYGLPGKDGEPGLDGFPGPRGEKGDLGEKGEKGFRGVKGEKGEPGQP) form the Collagen-like 7 domain. Residues 603–626 (RGEKGDLGEKGEKGFRGVKGEKGE) are compositionally biased toward basic and acidic residues.

As to quaternary structure, forms homodimers and homotrimers. Binds to the fibrillized forms of amyloid-beta protein 40 (beta-APP40) and amyloid-beta protein 42 (beta-APP42). Found associated with beta-APP42 more frequently than with beta-APP40. Undergoes proteolytic cleavage by furin protease to yield the soluble collagen-like Alzheimer amyloid plaque component. In terms of processing, glycosylated. Post-translationally, hydroxylated on 11% of proline residues and 49% of lysine residues. In terms of tissue distribution, expressed predominantly in brain. Deposited preferentially in primitive or neuritic amyloid plaques which are typical of Alzheimer disease.

It localises to the membrane. Inhibits fibrillization of amyloid-beta peptide during the elongation phase. Has also been shown to assemble amyloid fibrils into protease-resistant aggregates. Binds heparin. This is Collagen alpha-1(XXV) chain from Homo sapiens (Human).